A 431-amino-acid chain; its full sequence is Protein prenyltransferase alpha subunit repeat-containing protein 1-B (431 aa).

PFTA repeat units follow at residues 85–118 (ELIDVTCTLLLLNPDFTTAWNVRKELIQSGTLNP), 120–153 (KDLQLGKLALTKFPKSPETWIHRRWVLQRVVQEL), 178–211 (EEMHVCYEAAGRYPSNYNSWSHRIWVIQHLGNLN), 217–250 (DELSSTKHWVSMHVSDHSGFHYRQFLLKSLLCKT), and 293–326 (EEMKLNRELLDSYPGHETLWCHRRQIFKLIHQLL). The interval 363-383 (PMDVDGMSDPNKQGYTQETKR) is disordered. A PFTA 6 repeat occupies 394 to 431 (SLDSELRFINCVLTNCCSPEQSRFAASYRKWLLSLQGY).

It belongs to the protein prenyltransferase subunit alpha family.

In Xenopus laevis (African clawed frog), this protein is Protein prenyltransferase alpha subunit repeat-containing protein 1-B (ptar1-b).